The primary structure comprises 185 residues: Protein C2-DOMAIN ABA-RELATED 9 (185 aa).

In terms of domain architecture, C2 spans 1–104 (MEDKPLGILR…LEAHQMELDF (104 aa)). Arginine 22, aspartate 23, aspartate 28, aspartate 74, lysine 75, aspartate 76, and aspartate 82 together coordinate Ca(2+).

The protein belongs to the plant CAR protein family. Binds to PYR/PYL/RCAR abscisic acid intracellular receptors in an ABA-independent manner, both at the plasma membrane and in the nucleus. Interacts with LOT1 in the nuleus; this interaction is repressed by abscisic acid (ABA) and is sensitive to calcium ion Ca(2+), leading to free CAR9 accumulation at the plasma membrane. Requires Ca(2+) as cofactor.

It localises to the cell membrane. Its subcellular location is the nucleus. Stimulates the GTPase/ATPase activities of Obg-like ATPases. Mediates the transient calcium-dependent interaction of PYR/PYL/RCAR abscisic acid (ABA) receptors with the plasma membrane and thus regulates ABA sensitivity. This chain is Protein C2-DOMAIN ABA-RELATED 9, found in Arabidopsis thaliana (Mouse-ear cress).